The primary structure comprises 551 residues: Putative BTB/POZ domain-containing protein L76 (551 aa).

Residues 19–90 enclose the BTB domain; it reads TDIILEIEDD…FYGQENDVID (72 aa).

This sequence belongs to the mimivirus BTB/WD family.

This Acanthamoeba polyphaga (Amoeba) protein is Putative BTB/POZ domain-containing protein L76.